We begin with the raw amino-acid sequence, 856 residues long: MGTTASTAQQTVSAGTPFEGLQGSGTMDSRHSVSIHSFQSTSLHNSKAKSIIPNKVAPVVITYNCKEEFQIHDELLKAHYTLGRLSDNTPEHYLVQGRYFLVRDVTEKMDVLGTVGSCGAPNFRQVQGGLTVFGMGQPSLSGFRRVLQKLQKDGHRECVIFCVREEPVLFLRADEDFVSYTPRDKQNLHENLQGLGPGVRVESLELAIRKEIHDFAQLSENTYHVYHNTEDLWGEPHAVAIHGEDDLHVTEEVYKRPLFLQPTYRYHRLPLPEQGSPLEAQLDAFVSVLRETPSLLQLRDAHGPPPALVFSCQMGVGRTNLGMVLGTLILLHRSGTTSQPEAAPTQAKPLPMEQFQVIQSFLRMVPQGRRMVEEVDRAITACAELHDLKEVVLENQKKLEGIRPESPAQGSGSRHSVWQRALWSLERYFYLILFNYYLHEQYPLAFALSFSRWLCAHPELYRLPVTLSSAGPVAPRDLIARGSLREDDLVSPDALSTVREMDVANFRRVPRMPIYGTAQPSAKALGSILAYLTDAKRRLRKVVWVSLREEAVLECDGHTYSLRWPGPPVAPDQLETLEAQLKAHLSEPPPGKEGPLTYRFQTCLTMQEVFSQHRRACPGLTYHRIPMPDFCAPREEDFDQLLEALRAALSKDPGTGFVFSCLSGQGRTTTAMVVAVLAFWHIQGFPEVGEEELVSVPDAKFTKGEFQVVMKVVQLLPDGHRVKKEVDAALDTVSETMTPMHYHLREIIICTYRQAKAAKEAQEMRRLQLRSLQYLERYVCLILFNAYLHLEKADSWQRPFSTWMQEVASKAGIYEILNELGFPELESGEDQPFSRLRYRWQEQSCSLEPSAPEDLL.

Positions 1–16 (MGTTASTAQQTVSAGT) are enriched in low complexity. The tract at residues 1 to 29 (MGTTASTAQQTVSAGTPFEGLQGSGTMDS) is disordered. G2 carries N-myristoyl glycine lipidation. Residue S86 is modified to Phosphoserine.

This sequence belongs to the paladin family. In terms of tissue distribution, expressed in endothelial cells, and in certain larger vessels, in mural cells. In the brain, possibly expressed in microglia. Expressed in peripheral blood mononuclear cells (at protein level).

It localises to the cytoplasm. It is found in the cytosol. This chain is Paladin (PALD1), found in Homo sapiens (Human).